The chain runs to 454 residues: CBL-interacting protein kinase 4 (454 aa).

Positions 25–284 (YELGRMLGRG…ESLAAHHPWF (260 aa)) constitute a Protein kinase domain. ATP-binding positions include 31–39 (LGRGTFAKV) and Lys54. Asp151 (proton acceptor) is an active-site residue. Positions 169 to 198 (DFGLAALPDTLRDDGRLHTACGTPAYAAPE) are activation loop. Residues 311-335 (APPPPLNAFDIISMSPGLDLSGLFG) form the NAF domain. The segment at 341–370 (LREKRFTTTASPEKTLEQLGLAGGKLGYVV) is PPI.

The protein belongs to the protein kinase superfamily. CAMK Ser/Thr protein kinase family. SNF1 subfamily. It depends on Mn(2+) as a cofactor.

The catalysed reaction is L-seryl-[protein] + ATP = O-phospho-L-seryl-[protein] + ADP + H(+). It carries out the reaction L-threonyl-[protein] + ATP = O-phospho-L-threonyl-[protein] + ADP + H(+). CIPK serine-threonine protein kinases interact with CBL proteins. Binding of a CBL protein to the regulatory NAF domain of CIPK protein lead to the activation of the kinase in a calcium-dependent manner. In Oryza sativa subsp. japonica (Rice), this protein is CBL-interacting protein kinase 4 (CIPK4).